The following is a 148-amino-acid chain: uncharacterized protein (148 aa).

The next 2 helical transmembrane spans lie at 16 to 36 and 41 to 61; these read IVGAVIFSMSIIVILYISIIL and LSFSIILAVDILIIALFAYIF.

It to M.jannaschii MJ0696.

Its subcellular location is the cell membrane. This is an uncharacterized protein from Methanocaldococcus jannaschii (strain ATCC 43067 / DSM 2661 / JAL-1 / JCM 10045 / NBRC 100440) (Methanococcus jannaschii).